The sequence spans 436 residues: Enolase (436 aa).

Q167 provides a ligand contact to (2R)-2-phosphoglycerate. E209 functions as the Proton donor in the catalytic mechanism. Mg(2+) is bound by residues D246, E291, and D318. (2R)-2-phosphoglycerate contacts are provided by K343, R372, S373, and K394. K343 serves as the catalytic Proton acceptor.

The protein belongs to the enolase family. As to quaternary structure, component of the RNA degradosome, a multiprotein complex involved in RNA processing and mRNA degradation. Requires Mg(2+) as cofactor.

It localises to the cytoplasm. The protein localises to the secreted. The protein resides in the cell surface. It carries out the reaction (2R)-2-phosphoglycerate = phosphoenolpyruvate + H2O. It participates in carbohydrate degradation; glycolysis; pyruvate from D-glyceraldehyde 3-phosphate: step 4/5. Its function is as follows. Catalyzes the reversible conversion of 2-phosphoglycerate (2-PG) into phosphoenolpyruvate (PEP). It is essential for the degradation of carbohydrates via glycolysis. This Haemophilus influenzae (strain PittEE) protein is Enolase.